Here is a 232-residue protein sequence, read N- to C-terminus: MITLAIPSKGRLKEQALEVLAKAGLAISLPGDERKYHARVEGLDNVEIAFLSASEIAGEIGQGAVDLGITGEDLVRENLADWEARAEIAARLGFGHADVVVAVPEIWLDVDTMADLDDVAADFRQRHGRRLRIATKYWRLTQQFFSQKHGIQVYRIVESLGATEGAPAAGLADVIVDITTTGSTLRANHLKVLGDGVVLKSQACLVASKKARTAGDEATLRDIVTKMAAAVG.

The protein belongs to the ATP phosphoribosyltransferase family. Short subfamily. In terms of assembly, heteromultimer composed of HisG and HisZ subunits.

The protein resides in the cytoplasm. It carries out the reaction 1-(5-phospho-beta-D-ribosyl)-ATP + diphosphate = 5-phospho-alpha-D-ribose 1-diphosphate + ATP. The protein operates within amino-acid biosynthesis; L-histidine biosynthesis; L-histidine from 5-phospho-alpha-D-ribose 1-diphosphate: step 1/9. Catalyzes the condensation of ATP and 5-phosphoribose 1-diphosphate to form N'-(5'-phosphoribosyl)-ATP (PR-ATP). Has a crucial role in the pathway because the rate of histidine biosynthesis seems to be controlled primarily by regulation of HisG enzymatic activity. This is ATP phosphoribosyltransferase (hisG) from Mesorhizobium japonicum (strain LMG 29417 / CECT 9101 / MAFF 303099) (Mesorhizobium loti (strain MAFF 303099)).